The chain runs to 225 residues: MENVLKNDWGPLLAPEFEKEYYRKLAGFLKEEYSTHVVYPKKEDIFNALEYTSYENTKVVILGQDPYHGPNQAHGLSFSVQPGIKTPPSLLNMYKELRDEYGYDIPNNGYLVKWAEQGVLLLNTVLTVRQGEANSHKGKGWEHFTDRVIELLNEREKPVIFILWGRHAQAKKKLITNTKHHIIESVHPSPLSARRGFFGSKPYSKVNTILANMGEREIDWEIPNL.

Asp-65 functions as the Proton acceptor in the catalytic mechanism.

It belongs to the uracil-DNA glycosylase (UDG) superfamily. UNG family.

Its subcellular location is the cytoplasm. It catalyses the reaction Hydrolyzes single-stranded DNA or mismatched double-stranded DNA and polynucleotides, releasing free uracil.. In terms of biological role, excises uracil residues from the DNA which can arise as a result of misincorporation of dUMP residues by DNA polymerase or due to deamination of cytosine. This is Uracil-DNA glycosylase from Bacillus cereus (strain ATCC 10987 / NRS 248).